Here is a 274-residue protein sequence, read N- to C-terminus: 16S rRNA (guanine(1405)-N(7))-methyltransferase (274 aa).

Residues Phe-64, 102 to 104, Arg-108, Ala-133, Asp-156, 182 to 183, Leu-198, and Gln-207 each bind S-adenosyl-L-methionine; these read HMS and DL.

Belongs to the methyltransferase superfamily. Aminoglycoside resistance family.

It carries out the reaction guanosine(1405) in 16S rRNA + S-adenosyl-L-methionine = N(7)-methylguanosine(1405) in 16S rRNA + S-adenosyl-L-homocysteine. Specifically methylates the N(7) position of guanine 1405 in 16S rRNA. Confers resistance to aminoglycosides. The polypeptide is 16S rRNA (guanine(1405)-N(7))-methyltransferase (grm) (Micromonospora rosea).